The chain runs to 828 residues: MGNPFEGWPVHDIVYTVIVGLVMLAAVLEWFLWVAAFMYCLVKVFIKAEHWTIRALAVVVAILFVGFRAVFLPIMVVTLPLPSAIVKLWPEDMVVGLQWFAFWAFAGLLTIPWLFCVYHFVTNQLGREKRVKQVLDEVSAPKVVIVMPCYKEDPEVLLVAMNSIVDCDYPPSCIHVFLSFDGDQVDELYLNTIETFGVPLTLDSYPKSIDVTYKAARITISRFPHGGKRHCQKATFKLIDKVYKEYLERNDNLFILFIDSDCILDRVCLQNFIYDMELSPGNSRDMLAMTGVITSTTKKHSLITVLQDLEYIHGQLFERTVESGCGAVTCLPGALTMLRFSAFRRMAKYYFADKAEQCEDLFDFAKCHLGEDRWLTHLFMIGAKKRYQIQMCTSAFCKTEAVQTMQSLVKQRRRWFLGFITNEVCMLTDWRLWTRYPLLVLIRFMQNTIRTTALLFFIMVLAILTTSKRVSDLPVGFIAISLGLNWLMMIYFGAKLRRFKIWLYPLMFVLNPFFNWWYMVYGIFTAGQRTWGGPRADAAAADGDTTAQQAIEAAEKAGDDLNIVPETFIPAAQIKRKESGRRRIVAGGNIQPSAKIDGMFAIPERGANGWYQHDNISLFTVAHGHTGRVPLHPRDSFDSFLSAQTALNSVYIPRRVESIMGDEDRRKYELAQASQFNQFLSNQRRSTNGEPPQGQVYEYSDVDLQKAGYTDNPLPPTPGETASAVPAALNLHHKVGSTDSLVSLGSSASNSNQRDRGRQRTLMPPTSSQARTGRSPLGRASFLRTSTIEDIELEIGTSHGSSANRPALSRQASNNDPNNSNSGGHQQR.

Helical transmembrane passes span 17–37 (VIVG…VAAF), 57–77 (AVVV…IMVV), 95–115 (VGLQ…PWLF), 444–464 (FMQN…LAIL), 473–493 (LPVG…IYFG), and 501–521 (IWLY…YMVY). Asn-615 carries an N-linked (GlcNAc...) asparagine glycan. Composition is skewed to low complexity over residues 740 to 752 (SLVS…SNSN) and 813 to 822 (SNNDPNNSNS). Disordered stretches follow at residues 740–780 (SLVS…LGRA) and 793–828 (LEIG…HQQR). N-linked (GlcNAc...) asparagine glycosylation is present at Asn-818.

The protein belongs to the chitin synthase family. Class VII subfamily.

It localises to the membrane. The catalysed reaction is [(1-&gt;4)-N-acetyl-beta-D-glucosaminyl](n) + UDP-N-acetyl-alpha-D-glucosamine = [(1-&gt;4)-N-acetyl-beta-D-glucosaminyl](n+1) + UDP + H(+). Polymerizes chitin, a structural polymer of the cell wall and septum, by transferring the sugar moiety of UDP-GlcNAc to the non-reducing end of the growing chitin polymer. Required for normal appressorial chitin content and for the normal formation and function of these infection structures. The chain is Chitin synthase 7 from Pyricularia oryzae (strain 70-15 / ATCC MYA-4617 / FGSC 8958) (Rice blast fungus).